Here is a 494-residue protein sequence, read N- to C-terminus: Guanosine-5'-triphosphate,3'-diphosphate pyrophosphatase (494 aa).

Belongs to the GppA/Ppx family. GppA subfamily.

It catalyses the reaction guanosine 3'-diphosphate 5'-triphosphate + H2O = guanosine 3',5'-bis(diphosphate) + phosphate + H(+). The protein operates within purine metabolism; ppGpp biosynthesis; ppGpp from GTP: step 2/2. In terms of biological role, catalyzes the conversion of pppGpp to ppGpp. Guanosine pentaphosphate (pppGpp) is a cytoplasmic signaling molecule which together with ppGpp controls the 'stringent response', an adaptive process that allows bacteria to respond to amino acid starvation, resulting in the coordinated regulation of numerous cellular activities. The protein is Guanosine-5'-triphosphate,3'-diphosphate pyrophosphatase of Shigella dysenteriae serotype 1 (strain Sd197).